The chain runs to 377 residues: Caspase-4 (377 aa).

Residues 1-59 form a required for LPS-binding region; it reads MAEGNHRKKPLKVLESLGKDFLTGVLDNLVEQNVLNWKEEEKKKYYDAKTEDKVRVMAD. Positions 1 to 80 are excised as a propeptide; that stretch reads MAEGNHRKKP…MLLQTFFNID (80 aa). Residues 1–91 form the CARD domain; that stretch reads MAEGNHRKKP…ISPNKKAHPN (91 aa). A2 is subject to N-acetylalanine. At S83 the chain carries Phosphoserine. The interval 84–104 is disordered; that stretch reads PNKKAHPNMEAGPPESGESTD. Active-site residues include H210 and C258. The propeptide occupies 271 to 289; the sequence is SPASLEVASSQSSENLEED. R314 is modified ((Microbial infection) ADP-riboxanated arginine).

The protein belongs to the peptidase C14A family. Heterotetramer that consists of two anti-parallel arranged heterodimers, each one formed by a 20 kDa (Caspase-4 subunit p20) and a 10 kDa (Caspase-4 subunit p10) subunit. Upon direct LPS-binding, forms large homooligomers, resulting in its activation. These oligomers are often referred to as 'non-canonical inflammasomes'. In its precursor form, interacts with TMEM214; this interaction is required for association with the endoplasmic reticulum membrane. Interacts with CASP1. Interacts with NOD2. Interacts with SERPINB1; this interaction regulates CASP4 activity. As to quaternary structure, heterotetramer that consists of two anti-parallel arranged heterodimers, each one formed by a 20 kDa (Caspase-4 subunit p20) and a 10 kDa (Caspase-4 subunit p10) subunit. In terms of assembly, (Microbial infection) Interacts with NleF protein from pathogenic E.coli; this interaction leads to enzyme inhibition. (Microbial infection) Interacts with cathepsin CTSG; the interaction is promoted by the Td92 surface protein of the periodontal pathogen T.denticola and leads to CASP4 activation. Post-translationally, in response to activation signals, undergoes autoproteolytic cleavage and activation. (Microbial infection) ADP-riboxanation by S.flexneri OspC3 blocks CASP4 autoprocessing, preventing CASP4 activation and ability to recognize and cleave GSDMD, thereby thwarting the inflammasome/pyroptosis-mediated defense. As to expression, widely expressed, including in keratinocytes and colonic and small intestinal epithelial cells (at protein level). Not detected in brain.

The protein localises to the cytoplasm. The protein resides in the cytosol. It localises to the endoplasmic reticulum membrane. Its subcellular location is the mitochondrion. It is found in the inflammasome. The protein localises to the secreted. It catalyses the reaction Strict requirement for Asp at the P1 position. It has a preferred cleavage sequence of Tyr-Val-Ala-Asp-|- but also cleaves at Asp-Glu-Val-Asp-|-.. Activated by homooligomerization induced by direct binding to cytosolic LPS, in a TLR4-independent manner. In addition to LPS, CASP4/CASP11 may also be activated by oxidized phospholipid 1-palmitoyl-2-arachidonoyl- sn-glycero-3-phosphorylcholine, an oxidized phospholipid (oxPAPC), in dendritic cells, promoting adaptive immunity. The role of oxPAPC is however unclear and another report suggests that oxPAPC competes with LPS-binding and inhibits the non-canonical inflammasome in macrophages. Inflammatory caspase that acts as the effector of the non-canonical inflammasome by mediating lipopolysaccharide (LPS)-induced pyroptosis. Also indirectly activates the NLRP3 and NLRP6 inflammasomes. Acts as a thiol protease that cleaves a tetrapeptide after an Asp residue at position P1: catalyzes cleavage of CGAS, GSDMD and IL18. Effector of the non-canonical inflammasome independently of NLRP3 inflammasome and CASP1: the non-canonical inflammasome promotes pyroptosis through GSDMD cleavage without involving secretion of cytokine IL1B. In the non-canonical inflammasome, CASP4 is activated by direct binding to the lipid A moiety of LPS without the need of an upstream sensor. LPS-binding promotes CASP4 activation and CASP4-mediated cleavage of GSDMD and IL18, followed by IL18 secretion through the GSDMD pore, pyroptosis of infected cells and their extrusion into the gut lumen. Also indirectly promotes secretion of mature cytokines (IL1A and HMGB1) downstream of GSDMD-mediated pyroptosis via activation of the NLRP3 and NLRP6 inflammasomes. Involved in NLRP3-dependent CASP1 activation and IL1B secretion in response to non-canonical activators, such as UVB radiation or cholera enterotoxin. Involved in NLRP6 inflammasome-dependent activation in response to lipoteichoic acid (LTA), a cell-wall component of Gram-positive bacteria, which leads to CASP1 activation and IL1B secretion. Involved in LPS-induced IL6 secretion; this activity may not require caspase enzymatic activity. The non-canonical inflammasome is required for innate immunity to cytosolic, but not vacuolar, bacteria. Plays a crucial role in the restriction of S.typhimurium replication in colonic epithelial cells during infection. Activation of the non-canonical inflammasome in brain endothelial cells can lead to excessive pyroptosis, leading to blood-brain barrier breakdown. Pyroptosis limits bacterial replication, while cytokine secretion promotes the recruitment and activation of immune cells and triggers mucosal inflammation. May also act as an activator of adaptive immunity in dendritic cells, following activation by oxidized phospholipid 1-palmitoyl-2-arachidonoyl- sn-glycero-3-phosphorylcholine, an oxidized phospholipid (oxPAPC). Involved in cell death induced by endoplasmic reticulum stress and by treatment with cytotoxic APP peptides found in Alzheimer's patient brains. Cleavage of GSDMD is not strictly dependent on the consensus cleavage site but depends on an exosite interface on CASP4 that recognizes and binds the Gasdermin-D, C-terminal (GSDMD-CT) part. Catalyzes cleavage and maturation of IL18; IL18 processing also depends of the exosite interface on CASP4. In contrast, it does not directly process IL1B. During non-canonical inflammasome activation, cuts CGAS and may play a role in the regulation of antiviral innate immune activation. Functionally, (Microbial infection) In response to the Td92 surface protein of the periodontal pathogen T.denticola, activated by cathepsin CTSG which leads to production and secretion of IL1A and pyroptosis of gingival fibroblasts. In Homo sapiens (Human), this protein is Caspase-4.